Here is a 180-residue protein sequence, read N- to C-terminus: UPF0227 protein YcfP (180 aa).

This sequence belongs to the UPF0227 family.

In Escherichia coli O7:K1 (strain IAI39 / ExPEC), this protein is UPF0227 protein YcfP.